The primary structure comprises 463 residues: Protein DML1 (463 aa).

It belongs to the misato family.

The protein resides in the mitochondrion. In terms of biological role, involved in the partitioning of the mitochondrial organelle and mitochondrial DNA (mtDNA) inheritance. This is Protein DML1 (DML1) from Debaryomyces hansenii (strain ATCC 36239 / CBS 767 / BCRC 21394 / JCM 1990 / NBRC 0083 / IGC 2968) (Yeast).